The sequence spans 419 residues: 3-phosphoshikimate 1-carboxyvinyltransferase (419 aa).

Positions 21, 22, and 26 each coordinate 3-phosphoshikimate. Lys-21 serves as a coordination point for phosphoenolpyruvate. Positions 91 and 119 each coordinate phosphoenolpyruvate. 3-phosphoshikimate is bound by residues Ser-164, Ser-165, Gln-166, Ser-191, Asp-305, and Lys-332. Residue Gln-166 coordinates phosphoenolpyruvate. The Proton acceptor role is filled by Asp-305. Phosphoenolpyruvate contacts are provided by Arg-336 and Arg-376.

This sequence belongs to the EPSP synthase family. Monomer.

The protein resides in the cytoplasm. The enzyme catalyses 3-phosphoshikimate + phosphoenolpyruvate = 5-O-(1-carboxyvinyl)-3-phosphoshikimate + phosphate. It functions in the pathway metabolic intermediate biosynthesis; chorismate biosynthesis. Functionally, catalyzes the transfer of the enolpyruvyl moiety of phosphoenolpyruvate (PEP) to the 5-hydroxyl of shikimate-3-phosphate (S3P) to produce enolpyruvyl shikimate-3-phosphate and inorganic phosphate. The protein is 3-phosphoshikimate 1-carboxyvinyltransferase of Methanothermobacter thermautotrophicus (strain ATCC 29096 / DSM 1053 / JCM 10044 / NBRC 100330 / Delta H) (Methanobacterium thermoautotrophicum).